Here is a 265-residue protein sequence, read N- to C-terminus: Cyclin-C (265 aa).

In terms of domain architecture, Cyclin N-terminal spans 48–151 (IQVLGEQLKL…LLENLDCCLI (104 aa)).

Belongs to the cyclin family. Cyclin C subfamily. In terms of assembly, component of the Cdk8 module of the Mediator complex.

It is found in the nucleus. Its function is as follows. Component of the Mediator complex, a coactivator involved in regulated gene transcription of nearly all RNA polymerase II-dependent genes. Mediator functions as a bridge to convey information from gene-specific regulatory proteins to the basal RNA polymerase II transcription machinery. Mediator is recruited to promoters by direct interactions with regulatory proteins and serves as a scaffold for the assembly of a functional preinitiation complex with RNA polymerase II and the general transcription factors. Binds to and activates cyclin-dependent kinase Cdk8 that phosphorylates the CTD (C-terminal domain) of the large subunit of RNA polymerase II (RNAp II), which may inhibit the formation of a transcription initiation complex. The sequence is that of Cyclin-C (CycC) from Aedes aegypti (Yellowfever mosquito).